Here is a 944-residue protein sequence, read N- to C-terminus: Neutral alpha-glucosidase AB (944 aa).

Residues 1-32 form the signal peptide; sequence MAAVAAVAARRRRSWTGLVLACLGVCLGLTLA. Residues Cys41 and Cys47 are joined by a disulfide bond. At Ser52 the chain carries Phosphoserine. Asn97 carries N-linked (GlcNAc...) asparagine glycosylation. Positions 181 to 225 are disordered; that stretch reads QRAPRVSQGSKDPAEGDGAQPEEAPGDGDKPEEIQGKAEKDEPGA. Over residues 207 to 225 the composition is skewed to basic and acidic residues; sequence DGDKPEEIQGKAEKDEPGA. Residues Asp283 and Asp429 each contribute to the substrate site. Catalysis depends on Asp542, which acts as the Nucleophile. Arg602 lines the substrate pocket. Asp618 serves as the catalytic Proton donor. The cysteines at positions 633 and 644 are disulfide-linked. His676 is a binding site for substrate.

It belongs to the glycosyl hydrolase 31 family. Heterodimer of a catalytic alpha subunit (GANAB) and a beta subunit (PRKCSH). Binds glycosylated PTPRC. Post-translationally, contains sialylated polysaccharide chains.

The protein localises to the endoplasmic reticulum. The protein resides in the golgi apparatus. It is found in the melanosome. It catalyses the reaction N(4)-(alpha-D-Glc-(1-&gt;3)-alpha-D-Man-(1-&gt;2)-alpha-D-Man-(1-&gt;2)-alpha-D-Man-(1-&gt;3)-[alpha-D-Man-(1-&gt;2)-alpha-D-Man-(1-&gt;3)-[alpha-D-Man-(1-&gt;2)-alpha-D-Man-(1-&gt;6)]-alpha-D-Man-(1-&gt;6)]-beta-D-Man-(1-&gt;4)-beta-D-GlcNAc-(1-&gt;4)-beta-D-GlcNAc)-L-asparaginyl-[protein] + H2O = N(4)-(alpha-D-Man-(1-&gt;2)-alpha-D-Man-(1-&gt;2)-alpha-D-Man-(1-&gt;3)-[alpha-D-Man-(1-&gt;2)-alpha-D-Man-(1-&gt;3)-[alpha-D-Man-(1-&gt;2)-alpha-D-Man-(1-&gt;6)]-alpha-D-Man-(1-&gt;6)]-beta-D-Man-(1-&gt;4)-beta-D-GlcNAc-(1-&gt;4)-beta-D-GlcNAc)-L-asparaginyl-[protein] (N-glucan mannose isomer 9A1,2,3B1,2,3) + beta-D-glucose. The enzyme catalyses N(4)-(alpha-D-Glc-(1-&gt;3)-alpha-D-Glc-(1-&gt;3)-alpha-D-Man-(1-&gt;2)-alpha-D-Man-(1-&gt;2)-alpha-D-Man-(1-&gt;3)-[alpha-D-Man-(1-&gt;2)-alpha-D-Man-(1-&gt;3)-[alpha-D-Man-(1-&gt;2)-alpha-D-Man-(1-&gt;6)]-alpha-D-Man-(1-&gt;6)]-beta-D-Man-(1-&gt;4)-beta-D-GlcNAc-(1-&gt;4)-beta-D-GlcNAc)-L-asparaginyl-[protein] + H2O = N(4)-(alpha-D-Glc-(1-&gt;3)-alpha-D-Man-(1-&gt;2)-alpha-D-Man-(1-&gt;2)-alpha-D-Man-(1-&gt;3)-[alpha-D-Man-(1-&gt;2)-alpha-D-Man-(1-&gt;3)-[alpha-D-Man-(1-&gt;2)-alpha-D-Man-(1-&gt;6)]-alpha-D-Man-(1-&gt;6)]-beta-D-Man-(1-&gt;4)-beta-D-GlcNAc-(1-&gt;4)-beta-D-GlcNAc)-L-asparaginyl-[protein] + beta-D-glucose. It participates in glycan metabolism; N-glycan metabolism. Its function is as follows. Catalytic subunit of glucosidase II that cleaves sequentially the 2 innermost alpha-1,3-linked glucose residues from the Glc(2)Man(9)GlcNAc(2) oligosaccharide precursor of immature glycoproteins. Required for PKD1/Polycystin-1 and PKD2/Polycystin-2 maturation and localization to the cell surface and cilia. The polypeptide is Neutral alpha-glucosidase AB (GANAB) (Sus scrofa (Pig)).